The following is a 206-amino-acid chain: LOB domain-containing protein 2 (206 aa).

Residues 1–20 (MMQRNSNNTSITSNISNNSS) form a disordered region. In terms of domain architecture, LOB spans 23 to 123 (QACASCKHQR…KSLVHNQPLI (101 aa)).

Belongs to the LOB domain-containing protein family.

The chain is LOB domain-containing protein 2 (LBD2) from Arabidopsis thaliana (Mouse-ear cress).